The sequence spans 286 residues: 2-hydroxy-6-oxononadienedioate/2-hydroxy-6-oxononatrienedioate hydrolase (286 aa).

The 236-residue stretch at 36 to 271 (VIMLHGGGPG…RCGHWAQWEH (236 aa)) folds into the AB hydrolase-1 domain. The active-site Proton acceptor is His-265.

Belongs to the AB hydrolase superfamily. BphD family. As to quaternary structure, homodimer.

The catalysed reaction is (2Z,4E)-2-hydroxy-6-oxonona-2,4-dienedioate + H2O = (2Z)-2-hydroxypenta-2,4-dienoate + succinate + H(+). It carries out the reaction (2Z,4E,7E)-2-hydroxy-6-oxonona-2,4,7-trienedioate + H2O = (2Z)-2-hydroxypenta-2,4-dienoate + fumarate + H(+). Its pathway is aromatic compound metabolism; 3-phenylpropanoate degradation. Its function is as follows. Catalyzes the cleavage of the C5-C6 bond of 2-hydroxy-6-oxononadienedioate, and probably also 2-hydroxy-6-oxononatrienedioate, a dienol ring fission product of the bacterial meta-cleavage pathway for degradation of phenylpropionic acid. The polypeptide is 2-hydroxy-6-oxononadienedioate/2-hydroxy-6-oxononatrienedioate hydrolase (mhpC) (Comamonas testosteroni (Pseudomonas testosteroni)).